The sequence spans 126 residues: Basic phospholipase A2 1 (126 aa).

A propeptide spanning residues 1 to 7 (SNRPMPL) is cleaved from the precursor. 7 disulfides stabilise this stretch: C18–C78, C33–C125, C35–C51, C50–C106, C57–C99, C67–C92, and C85–C97. The Ca(2+) site is built by Y34, G36, and G38. The active site involves H54. D55 serves as a coordination point for Ca(2+). D100 is a catalytic residue.

It belongs to the phospholipase A2 family. Group I subfamily. D49 sub-subfamily. In terms of assembly, heterodimer formed between two homologous isoforms: isoform 1 and isoform 2. Ca(2+) serves as cofactor. In terms of tissue distribution, expressed by the venom gland.

It localises to the secreted. The catalysed reaction is a 1,2-diacyl-sn-glycero-3-phosphocholine + H2O = a 1-acyl-sn-glycero-3-phosphocholine + a fatty acid + H(+). Its function is as follows. PLA2 catalyzes the calcium-dependent hydrolysis of the 2-acyl groups in 3-sn-phosphoglycerides. This chain is Basic phospholipase A2 1, found in Naja sagittifera (Andaman cobra).